Consider the following 450-residue polypeptide: Ribulose bisphosphate carboxylase large chain (450 aa).

The residue at position 4 (Lys-4) is an N6,N6,N6-trimethyllysine. Substrate is bound by residues Asn-113 and Thr-163. The Proton acceptor role is filled by Lys-165. Lys-167 contacts substrate. Residues Lys-191, Asp-193, and Glu-194 each coordinate Mg(2+). Lys-191 is modified (N6-carboxylysine). His-284 (proton acceptor) is an active-site residue. Arg-285, His-317, and Ser-369 together coordinate substrate.

It belongs to the RuBisCO large chain family. Type I subfamily. In terms of assembly, heterohexadecamer of 8 large chains and 8 small chains; disulfide-linked. The disulfide link is formed within the large subunit homodimers. The cofactor is Mg(2+). The disulfide bond which can form in the large chain dimeric partners within the hexadecamer appears to be associated with oxidative stress and protein turnover.

Its subcellular location is the plastid. The protein localises to the chloroplast. It carries out the reaction 2 (2R)-3-phosphoglycerate + 2 H(+) = D-ribulose 1,5-bisphosphate + CO2 + H2O. The catalysed reaction is D-ribulose 1,5-bisphosphate + O2 = 2-phosphoglycolate + (2R)-3-phosphoglycerate + 2 H(+). Its function is as follows. RuBisCO catalyzes two reactions: the carboxylation of D-ribulose 1,5-bisphosphate, the primary event in carbon dioxide fixation, as well as the oxidative fragmentation of the pentose substrate in the photorespiration process. Both reactions occur simultaneously and in competition at the same active site. The sequence is that of Ribulose bisphosphate carboxylase large chain from Sedum rubrotinctum (Jelly bean plant).